The following is a 313-amino-acid chain: Protein YABBY 3 (313 aa).

Residues 65 to 92 form a C4-type zinc finger; it reads CHYCDTVLVVSVPSSSLFETVTVRCGHC. 2 disordered regions span residues 107–149 and 180–221; these read TTAA…SLLD and NNSP…KRQR. The span at 112–128 shows a compositional bias: pro residues; it reads APPPPPPPPPPPPPPAA.

The protein belongs to the YABBY family. Expressed in shoot apex and young inflorescences.

Its subcellular location is the nucleus. The sequence is that of Protein YABBY 3 (YAB3) from Oryza sativa subsp. japonica (Rice).